Reading from the N-terminus, the 1138-residue chain is Nuclear pore complex-interacting protein family member B4 (1138 aa).

Residues 63-87 form a helical membrane-spanning segment; sequence VIIAFPTSYKVVITLWIVYLWVSLL. Disordered regions lie at residues 241-263, 291-620, and 873-1138; these read NRMGHQPPPPTQQHSITDNSLSL, TPLP…NIKT, and ERLR…RRLS. Positions 252 to 262 are enriched in polar residues; that stretch reads QQHSITDNSLS. Positions 349 to 359 are enriched in pro residues; it reads PLPPSALPSAP. 8 stretches are compositionally biased toward basic and acidic residues: residues 406–416, 448–458, 490–500, 532–542, 574–584, 908–918, 950–960, and 992–1002; these read DNIKTPAERLR.

Belongs to the NPIP family.

It localises to the membrane. The sequence is that of Nuclear pore complex-interacting protein family member B4 (NPIPB4) from Homo sapiens (Human).